Here is a 608-residue protein sequence, read N- to C-terminus: Glutamine--fructose-6-phosphate aminotransferase [isomerizing] (608 aa).

C2 functions as the Nucleophile; for GATase activity in the catalytic mechanism. Residues 2-217 (CGIVGIVGNQ…DGDWAVIGKT (216 aa)) form the Glutamine amidotransferase type-2 domain. SIS domains are found at residues 281–422 (ISDA…ARGT) and 456–598 (LSRE…VDQP). The For Fru-6P isomerization activity role is filled by K603.

The protein localises to the cytoplasm. The enzyme catalyses D-fructose 6-phosphate + L-glutamine = D-glucosamine 6-phosphate + L-glutamate. Functionally, involved in the production of the root hair deformation (HAD) factor specifically on medicago. The protein is Glutamine--fructose-6-phosphate aminotransferase [isomerizing] (nodM) of Rhizobium meliloti (strain 1021) (Ensifer meliloti).